A 180-amino-acid polypeptide reads, in one-letter code: MGLTISSLFSRLFGKKQMRILMVGLDAAGKTTILYKLKLGEIVTTIPTIGFNVETVEYKNICFTVWDVGGQDRIRPLWKHYFQNTQGLIFVVDSNDRERIQEVADELQKMLLVDELRDAVLLLFANKQDLPNAMAISEMTDKLGLQSLRNRTWYVQATCATQGTGLYEGLDWLSNELSKR.

G2 carries N-myristoyl glycine lipidation. GTP is bound by residues 24-31 (GLDAAGKT), 67-71 (DVGGQ), and 126-129 (NKQD). Residue S147 is modified to Phosphoserine.

Belongs to the small GTPase superfamily. Arf family. As to quaternary structure, forms a complex containing RAB11A, ASAP1, RAB3IP, RAP11FIP3 and ARF4; the complex promotes preciliary trafficking; the complex binds to RHO in photoreceptor cells and promotes RHO ciliary transport.

The protein localises to the golgi apparatus. The protein resides in the membrane. Its function is as follows. GTP-binding protein that functions as an allosteric activator of the cholera toxin catalytic subunit, an ADP-ribosyltransferase. Involved in protein trafficking; may modulate vesicle budding and uncoating within the Golgi apparatus. Part of the ciliary targeting complex containing Rab11, ASAP1, Rabin8/RAB3IP, RAB11FIP3 and ARF4, which direct preciliary vesicle trafficking to mother centriole and ciliogenesis initiation. The protein is ADP-ribosylation factor 4 (ARF4) of Homo sapiens (Human).